Here is a 334-residue protein sequence, read N- to C-terminus: Protein FAM50B (334 aa).

Ala-2 carries the post-translational modification N-acetylalanine. The interval 122-175 is disordered; it reads FTLDEEEGDQEDSRQAESAEAHSAGAKKNLGKNPDVDTSFLPDREREEEENRLR. Composition is skewed to basic and acidic residues over residues 132 to 141 and 163 to 175; these read EDSRQAESAE and PDRE…NRLR.

This sequence belongs to the FAM50 family. Widely expressed. Abundant in testis, where it is expressed in seminiferous tubules, not in the interstitium. At the cellular level, expressed in primary spermatocytes and round spermatids, but not detectable in spermatogonia, elongating spermatids, mature spermatozoa, Sertoli cells or Leydig cells.

In Mus musculus (Mouse), this protein is Protein FAM50B (Fam50b).